Consider the following 87-residue polypeptide: Small ribosomal subunit protein bS16 (87 aa).

This sequence belongs to the bacterial ribosomal protein bS16 family.

This is Small ribosomal subunit protein bS16 from Ehrlichia ruminantium (strain Welgevonden).